A 267-amino-acid polypeptide reads, in one-letter code: Interleukin-1 alpha (267 aa).

Positions 1–112 are excised as a propeptide; sequence MAKVPDLFED…DPEEGIIKPR (112 aa). The N-linked (GlcNAc...) asparagine glycan is linked to N64. Position 82 is an N6-acetyllysine (K82). Positions 82–86 are nuclear localization signal (NLS); the sequence is KKRRL. S87 carries the post-translational modification Phosphoserine. Residues N100 and N141 are each glycosylated (N-linked (GlcNAc...) asparagine).

This sequence belongs to the IL-1 family. In terms of assembly, monomer. Interacts with TMED10; the interaction mediates the translocation from the cytoplasm into the ERGIC (endoplasmic reticulum-Golgi intermediate compartment) and thereby secretion. Interacts with IL1R1. Interacts with S100A13; this interaction is the first step in the export of IL1A, followed by direct translocation of this complex across the plasma membrane. Acetylated within its nuclear localization sequence, which impacts subcellular localization. In terms of processing, proteolytic processed by CAPN1 in a calcium-dependent manner. Cleavage from 31 kDa precursor to 18 kDa biologically active molecules. Post-translationally, phosphorylated. Phosphorylation greatly enhances susceptibility to digestion and promotes the conversion of pre-IL1A alpha to the biologically active IL1A.

Its subcellular location is the nucleus. It is found in the cytoplasm. The protein resides in the secreted. Its function is as follows. Cytokine constitutively present intracellularly in nearly all resting non-hematopoietic cells that plays an important role in inflammation and bridges the innate and adaptive immune systems. After binding to its receptor IL1R1 together with its accessory protein IL1RAP, forms the high affinity interleukin-1 receptor complex. Signaling involves the recruitment of adapter molecules such as MYD88, IRAK1 or IRAK4. In turn, mediates the activation of NF-kappa-B and the three MAPK pathways p38, p42/p44 and JNK pathways. Within the cell, acts as an alarmin and cell death results in its liberation in the extracellular space after disruption of the cell membrane to induce inflammation and alert the host to injury or damage. In addition to its role as a danger signal, which occurs when the cytokine is passively released by cell necrosis, directly senses DNA damage and acts as signal for genotoxic stress without loss of cell integrity. The protein is Interleukin-1 alpha (IL1A) of Oryctolagus cuniculus (Rabbit).